The primary structure comprises 394 residues: Protein arginine N-methyltransferase 8 (394 aa).

A lipid anchor (N-myristoyl glycine) is attached at G2. The segment at 21-40 is disordered; that stretch reads VESTEVSSAPPQPPQPVIPA. Short sequence motifs (SH3-binding) lie at residues 29 to 42 and 53 to 58; these read APPQPPQPVIPAKP and PSCPGR. Over residues 30–39 the composition is skewed to pro residues; sequence PPQPPQPVIP. Omega-N-methylarginine; by PRMT8 is present on R58. An Asymmetric dimethylarginine; by PRMT8 modification is found at R73. In terms of domain architecture, SAM-dependent MTase PRMT-type spans 73–394; sequence RDYYFDSYAH…TSVSNDYKMR (322 aa). S-adenosyl-L-methionine is bound by residues H86, R95, G119, 119-122, E141, and E170; that span reads GSGT. Catalysis depends on residues E185 and E194.

This sequence belongs to the class I-like SAM-binding methyltransferase superfamily. Protein arginine N-methyltransferase family. PRMT8 subfamily. Homodimer. Tetramer; individual homodimers associates to form a homotetramer. Homooctamer; individual homodimers associates to form a homooctamer and homooligomerization is required for proper localization to the cell membrane. Heterodimer with PRMT1; heterodimerization may recruit PRMT1 activity to the plasma membrane. Interacts with PRMT2 (via the SH3 domain). Interacts with FYN (via the SH3 domain). Interacts with EWS; independently of EWS methylation status. Brain-specific. Only expressed in neurons, especially in the somatosensory and limbic systems, and a part of motor system. Highly expressed in all of the regions related to general somatosensory system. Expressed in most of the relay nuclei intervening the special somatosensory system, such as the auditory, visual and vestibular systems. Also present in forebrain limbic areas and thalamic nuclei relevant to limbic areas and in areas related to the motor system, such as the caudate putamen, Purkinje cells, inferior olivary nucleus and cerebellar nuclei.

It is found in the cell membrane. The catalysed reaction is L-arginyl-[protein] + S-adenosyl-L-methionine = N(omega)-methyl-L-arginyl-[protein] + S-adenosyl-L-homocysteine + H(+). It carries out the reaction L-arginyl-[protein] + 2 S-adenosyl-L-methionine = N(omega),N(omega)-dimethyl-L-arginyl-[protein] + 2 S-adenosyl-L-homocysteine + 2 H(+). S-adenosyl-L-methionine-dependent and membrane-associated arginine methyltransferase that can both catalyze the formation of omega-N monomethylarginine (MMA) and asymmetrical dimethylarginine (aDMA) in proteins such as NIFK, myelin basic protein, histone H4, H2A and H2A/H2B dimer. Able to mono- and dimethylate EWS protein; however its precise role toward EWS remains unclear as it still interacts with fully methylated EWS. In Mus musculus (Mouse), this protein is Protein arginine N-methyltransferase 8.